Reading from the N-terminus, the 39-residue chain is Photosystem II reaction center protein J (39 aa).

The chain crosses the membrane as a helical span at residues 7–27 (IPLWIVATVAGTGVLVVVGLF).

Belongs to the PsbJ family. PSII is composed of 1 copy each of membrane proteins PsbA, PsbB, PsbC, PsbD, PsbE, PsbF, PsbH, PsbI, PsbJ, PsbK, PsbL, PsbM, PsbT, PsbX, PsbY, PsbZ, Psb30/Ycf12, peripheral proteins PsbO, CyanoQ (PsbQ), PsbU, PsbV and a large number of cofactors. It forms dimeric complexes.

Its subcellular location is the cellular thylakoid membrane. One of the components of the core complex of photosystem II (PSII). PSII is a light-driven water:plastoquinone oxidoreductase that uses light energy to abstract electrons from H(2)O, generating O(2) and a proton gradient subsequently used for ATP formation. It consists of a core antenna complex that captures photons, and an electron transfer chain that converts photonic excitation into a charge separation. The chain is Photosystem II reaction center protein J from Synechococcus elongatus (strain ATCC 33912 / PCC 7942 / FACHB-805) (Anacystis nidulans R2).